The following is a 76-amino-acid chain: Vasotab (76 aa).

The first 20 residues, 1 to 20 (MKFALFSVLVVLLIATFVAA), serve as a signal peptide directing secretion. The Kazal-like domain occupies 21 to 76 (DECPRICTADYRPVCGTPSGGRRSANRTFGNQCSLNAHNCLNKGDTYDKLHDGECK). Disulfide bonds link C23–C60, C27–C53, and C35–C75.

As to expression, expressed by the salivary gland.

Its subcellular location is the secreted. Functionally, vasodilator protein that inhibits vasoconstriction of isolated rat femoral artery induced by phenylephrine. Since platelet aggregation and vasoconstriction are key hemostatic responses, particularly in small wounds, this protein likely participates in the antihemostatic responses during blood feeding. Blocks L-type calcium channels (Cav1/CACNA1) in left ventricular myocytes isolated from rat hearts. This is Vasotab from Hybomitra bimaculata (Horse fly).